The primary structure comprises 267 residues: Indole-3-glycerol phosphate synthase (267 aa).

It belongs to the TrpC family.

It carries out the reaction 1-(2-carboxyphenylamino)-1-deoxy-D-ribulose 5-phosphate + H(+) = (1S,2R)-1-C-(indol-3-yl)glycerol 3-phosphate + CO2 + H2O. It functions in the pathway amino-acid biosynthesis; L-tryptophan biosynthesis; L-tryptophan from chorismate: step 4/5. The chain is Indole-3-glycerol phosphate synthase from Cupriavidus pinatubonensis (strain JMP 134 / LMG 1197) (Cupriavidus necator (strain JMP 134)).